We begin with the raw amino-acid sequence, 175 residues long: CDP-archaeol synthase (175 aa).

A run of 4 helical transmembrane segments spans residues 41–61 (GLFS…WLSF), 82–102 (LIVV…KSFF), 122–142 (FVVG…VSNF), and 150–170 (VIII…FIGV).

This sequence belongs to the CDP-archaeol synthase family. Mg(2+) serves as cofactor.

The protein resides in the cell membrane. It catalyses the reaction 2,3-bis-O-(geranylgeranyl)-sn-glycerol 1-phosphate + CTP + H(+) = CDP-2,3-bis-O-(geranylgeranyl)-sn-glycerol + diphosphate. It participates in membrane lipid metabolism; glycerophospholipid metabolism. Its function is as follows. Catalyzes the formation of CDP-2,3-bis-(O-geranylgeranyl)-sn-glycerol (CDP-archaeol) from 2,3-bis-(O-geranylgeranyl)-sn-glycerol 1-phosphate (DGGGP) and CTP. This reaction is the third ether-bond-formation step in the biosynthesis of archaeal membrane lipids. This is CDP-archaeol synthase from Methanosarcina mazei (strain ATCC BAA-159 / DSM 3647 / Goe1 / Go1 / JCM 11833 / OCM 88) (Methanosarcina frisia).